Consider the following 313-residue polypeptide: D-alanine--D-alanine ligase (313 aa).

Positions 108 to 308 constitute an ATP-grasp domain; sequence KLVWQQTGVP…YSELVVKVLS (201 aa). 138–193 provides a ligand contact to ATP; it reads VAKLGLPLFVKPASEGSSVAVLKVKTADALPAALAEAATHDKIVIVEKSIEGGGEY. 3 residues coordinate Mg(2+): aspartate 262, glutamate 275, and asparagine 277.

This sequence belongs to the D-alanine--D-alanine ligase family. Mg(2+) is required as a cofactor. Requires Mn(2+) as cofactor.

It is found in the cytoplasm. The enzyme catalyses 2 D-alanine + ATP = D-alanyl-D-alanine + ADP + phosphate + H(+). It participates in cell wall biogenesis; peptidoglycan biosynthesis. In terms of biological role, cell wall formation. The protein is D-alanine--D-alanine ligase of Burkholderia multivorans (strain ATCC 17616 / 249).